We begin with the raw amino-acid sequence, 765 residues long: Probable dipeptidyl peptidase 4 (765 aa).

The signal sequence occupies residues 1–14 (MKWSILLLVGCAAA). 8 N-linked (GlcNAc...) asparagine glycosylation sites follow: Asn-35, Asn-78, Asn-101, Asn-110, Asn-169, Asn-218, Asn-465, and Asn-490. The Charge relay system role is filled by Ser-613. Residue Asn-665 is glycosylated (N-linked (GlcNAc...) asparagine). Residues Asp-690 and His-725 each act as charge relay system in the active site.

The protein belongs to the peptidase S9B family.

The protein localises to the secreted. It carries out the reaction Release of an N-terminal dipeptide, Xaa-Yaa-|-Zaa-, from a polypeptide, preferentially when Yaa is Pro, provided Zaa is neither Pro nor hydroxyproline.. Extracellular dipeptidyl-peptidase which removes N-terminal dipeptides sequentially from polypeptides having unsubstituted N-termini provided that the penultimate residue is proline. In Neosartorya fischeri (strain ATCC 1020 / DSM 3700 / CBS 544.65 / FGSC A1164 / JCM 1740 / NRRL 181 / WB 181) (Aspergillus fischerianus), this protein is Probable dipeptidyl peptidase 4 (dpp4).